The sequence spans 117 residues: Non-specific lipid-transfer protein (117 aa).

Positions 1–26 are cleaved as a signal peptide; that stretch reads MASSAFVKFTCALVMCMMVAAPLAEA. 4 disulfide bridges follow: cysteine 29–cysteine 76, cysteine 39–cysteine 53, cysteine 54–cysteine 99, and cysteine 74–cysteine 113.

The protein belongs to the plant LTP family.

Plant non-specific lipid-transfer proteins transfer phospholipids as well as galactolipids across membranes. May play a role in wax or cutin deposition in the cell walls of expanding epidermal cells and certain secretory tissues. Also has fungicide activity. The polypeptide is Non-specific lipid-transfer protein (IWF1') (Beta vulgaris (Sugar beet)).